The chain runs to 130 residues: Small ribosomal subunit protein uS8 (130 aa).

Belongs to the universal ribosomal protein uS8 family. As to quaternary structure, part of the 30S ribosomal subunit.

Functionally, one of the primary rRNA binding proteins, it binds directly to 16S rRNA central domain where it helps coordinate assembly of the platform of the 30S subunit. The chain is Small ribosomal subunit protein uS8 from Methanosarcina barkeri (strain Fusaro / DSM 804).